Here is a 124-residue protein sequence, read N- to C-terminus: WAP four-disulfide core domain protein 2 (124 aa).

An N-terminal signal peptide occupies residues 1–27 (MPACRPGPLAGALLLGLLLLGLPRVPG). WAP domains follow at residues 29–73 (EVEK…CHLP) and 74–123 (NEKE…VTPI). 8 disulfide bridges follow: cysteine 36–cysteine 62, cysteine 45–cysteine 66, cysteine 49–cysteine 61, cysteine 55–cysteine 70, cysteine 80–cysteine 110, cysteine 93–cysteine 114, cysteine 97–cysteine 109, and cysteine 103–cysteine 119. Asparagine 44 is a glycosylation site (N-linked (GlcNAc...) asparagine).

As to quaternary structure, homotrimer; disulfide-linked. In terms of tissue distribution, epididymis. Highest levels are found in the caput and proximal cauda regions. Lower levels in the distal cauda. Not detected in the efferent ducts.

It localises to the secreted. Broad range protease inhibitor. Possible function in sperm maturation. The polypeptide is WAP four-disulfide core domain protein 2 (WFDC2) (Canis lupus familiaris (Dog)).